Here is a 500-residue protein sequence, read N- to C-terminus: Lysine--tRNA ligase (500 aa).

E410 and E417 together coordinate Mg(2+).

It belongs to the class-II aminoacyl-tRNA synthetase family. As to quaternary structure, homodimer. Mg(2+) serves as cofactor.

It localises to the cytoplasm. It carries out the reaction tRNA(Lys) + L-lysine + ATP = L-lysyl-tRNA(Lys) + AMP + diphosphate. The protein is Lysine--tRNA ligase of Pseudomonas fluorescens (strain ATCC BAA-477 / NRRL B-23932 / Pf-5).